Consider the following 207-residue polypeptide: Large ribosomal subunit protein uL3 (207 aa).

Positions 129–152 are disordered; the sequence is AGGPAGHGSRFQRHPGSIGSNTTP.

This sequence belongs to the universal ribosomal protein uL3 family. As to quaternary structure, part of the 50S ribosomal subunit. Forms a cluster with proteins L14 and L19.

One of the primary rRNA binding proteins, it binds directly near the 3'-end of the 23S rRNA, where it nucleates assembly of the 50S subunit. In Leptospira biflexa serovar Patoc (strain Patoc 1 / ATCC 23582 / Paris), this protein is Large ribosomal subunit protein uL3.